The chain runs to 187 residues: Avirulence protein ATR39-2 (187 aa).

An N-terminal signal peptide occupies residues 1–20; the sequence is MVKCTPLLALTVIVSAGSDA. Residues 49 to 66 carry the RxLR-dEER motif; sequence RVLRASDVPNEVAAGESR.

This sequence belongs to the RxLR effector family.

The protein localises to the secreted. It is found in the host cell. Its function is as follows. Secreted effector that acts as an elicitor of hypersensitive response (HR) specifically on plants carrying defense protein RPP39. The allele ATR39-1 is recognized by RPP39, whereas the ATR39-2 allele is nor recognized. The sequence is that of Avirulence protein ATR39-2 from Hyaloperonospora arabidopsidis (strain Emoy2) (Downy mildew agent).